A 476-amino-acid chain; its full sequence is Protein DETOXIFICATION 1 (476 aa).

The next 12 helical transmembrane spans lie at 35 to 55 (AAPM…SVMV), 66 to 86 (GVAL…CGLV), 117 to 137 (IPIC…LISL), 146 to 166 (IAGS…IVIP), 184 to 204 (AVTT…LFGL), 208 to 228 (GPAM…SCYV), 260 to 280 (AAMI…SGLL), 289 to 309 (VLSI…GVAA), 331 to 351 (VLAG…LLFT), 370 to 390 (VADL…TAVL), 402 to 422 (IGAW…GIYL), and 433 to 453 (LWCG…IVTA).

It belongs to the multi antimicrobial extrusion (MATE) (TC 2.A.66.1) family. Ubiquitous. Highest expression in flowers and stems.

It localises to the cell membrane. Its function is as follows. Efflux carrier for plant-derived alkaloids, antibiotics, heavy metal and other toxic compounds. Involved in cadmium detoxification. Requires probably a proton-motive force for the efflux. This chain is Protein DETOXIFICATION 1, found in Arabidopsis thaliana (Mouse-ear cress).